Here is a 127-residue protein sequence, read N- to C-terminus: Small ribosomal subunit protein eS8 (127 aa).

A disordered region spans residues 1–31 (MTIFQGKSGKKATGGSLKQSRKKRRFELGRE).

It belongs to the eukaryotic ribosomal protein eS8 family. As to quaternary structure, part of the 30S ribosomal subunit.

This chain is Small ribosomal subunit protein eS8 (rps8e), found in Thermoplasma acidophilum (strain ATCC 25905 / DSM 1728 / JCM 9062 / NBRC 15155 / AMRC-C165).